A 473-amino-acid chain; its full sequence is MAPRTMYDKIWDAHLVEMAEDGTGLLYIDRHLVHEVTSPQAFEGLRMAKRQVHAPQKTLAVADHNVPTTDRSKGIADEESRIQVETLEHNAQDFGVEYLQMSDIRQGIVHIVGPEQGFTLPGTTIVCGDSHTSTHGAFGALAHGIGTSEVEHVLATQTLIQSKAKNMRINVVGKAPEGFTAKDIVLAIIGEIGTAGGTGYVIEYAGEAIRDLSMEGRMTVCNMTIEGGARAGLIAPDDKTYAYLEGRPRAPKGKAWEMAVEYWKTLPSDPDAKFDKEITIDIANLPPLITWGTSPENVIKITDRIPDPKDVADPSHAKSMQRALDYMGLTPGTPINEVKIDRVFIGSCTNGRIEDLRAAAVIAEKAIKAGRKVASTVNAMVVPGSGLVKEQAEKEGLDKIFLEAGFEWREPGCSMCLAMNADKLAPGERCASTSNRNFEGRQGRGGRTHLVSPAMAVAAAIEGHFTDVREFGN.

Positions 348, 413, and 416 each coordinate [4Fe-4S] cluster.

This sequence belongs to the aconitase/IPM isomerase family. LeuC type 1 subfamily. Heterodimer of LeuC and LeuD. The cofactor is [4Fe-4S] cluster.

The enzyme catalyses (2R,3S)-3-isopropylmalate = (2S)-2-isopropylmalate. The protein operates within amino-acid biosynthesis; L-leucine biosynthesis; L-leucine from 3-methyl-2-oxobutanoate: step 2/4. Catalyzes the isomerization between 2-isopropylmalate and 3-isopropylmalate, via the formation of 2-isopropylmaleate. The polypeptide is 3-isopropylmalate dehydratase large subunit (Parvibaculum lavamentivorans (strain DS-1 / DSM 13023 / NCIMB 13966)).